The following is a 503-amino-acid chain: Lysine--tRNA ligase (503 aa).

Mg(2+) contacts are provided by Glu-414 and Glu-421.

This sequence belongs to the class-II aminoacyl-tRNA synthetase family. In terms of assembly, homodimer. The cofactor is Mg(2+).

The protein localises to the cytoplasm. The enzyme catalyses tRNA(Lys) + L-lysine + ATP = L-lysyl-tRNA(Lys) + AMP + diphosphate. This Neisseria gonorrhoeae (strain ATCC 700825 / FA 1090) protein is Lysine--tRNA ligase.